We begin with the raw amino-acid sequence, 652 residues long: MSQIHKHTIPANIADRCLINPQQYEAMYQQSINVPDTFWGEQGKILDWIKPYQKVKNTSFAPGNVSIKWYEDGTLNLAANCLDRHLQENGDRTAIIWEGDDASQSKHISYKELHRDVCRFANTLLELGIKKGDVVAIYMPMVPEAAVAMLACARIGAVHSVIFGGFSPEAVAGRIIDSNSRLVITSDEGVRAGRSIPLKKNVDDALKNPNVTSVEHVVVLKRTGGKIDWQEGRDLWWHDLVEQASDQHQAEEMNAEDPLFILYTSGSTGKPKGVLHTTGGYLVYAALTFKYVFDYHPGDIYWCTADVGWVTGHSYLLYGPLACGATTLMFEGVPNWPTPARMAQVVDKHQVNILYTAPTAIRALMAEGDKAIEGTDRSSLRILGSVGEPINPEAWEWYWKKIGNEKCPVVDTWWQTETGGFMITPLPGATELKAGSATRPFFGVQPALVDNEGNPLEGATEGSLVITDSWPGQARTLFGDHERFEQTYFSTFKNMYFSGDGARRDEDGYYWITGRVDDVLNVSGHRLGTAEIESALVAHPKIAEAAVVGIPHNIKGQAIYAYVTLNHGEEPSPELYAEVRNWVRKEIGPLATPDVLHWTDSLPKTRSGKIMRRILRKIAAGDTSNLGDTSTLADPGVVEKLLEEKQAIAMPS.

CoA is bound by residues 191 to 194 (RAGR), T311, and N335. ATP is bound by residues 387-389 (GEP), 411-416 (DTWWQT), D500, and R515. CoA is bound at residue S523. ATP is bound at residue R526. 3 residues coordinate Mg(2+): V537, H539, and I542. R584 lines the CoA pocket. The residue at position 609 (K609) is an N6-acetyllysine; by autocatalysis.

Belongs to the ATP-dependent AMP-binding enzyme family. In terms of assembly, forms a 1:1 complex with CobB/NAD-dependent deacetylase. The cofactor is Mg(2+). In terms of processing, autoacetylated. Deacetylation by CobB activates the enzyme.

It carries out the reaction acetate + ATP + CoA = acetyl-CoA + AMP + diphosphate. Functionally, catalyzes the conversion of acetate into acetyl-CoA (AcCoA), an essential intermediate at the junction of anabolic and catabolic pathways. Acs undergoes a two-step reaction. In the first half reaction, Acs combines acetate with ATP to form acetyl-adenylate (AcAMP) intermediate. In the second half reaction, it can then transfer the acetyl group from AcAMP to the sulfhydryl group of CoA, forming the product AcCoA. In terms of biological role, enables the cell to use acetate during aerobic growth to generate energy via the TCA cycle, and biosynthetic compounds via the glyoxylate shunt. Acetylates CheY, the response regulator involved in flagellar movement and chemotaxis. In Escherichia coli (strain K12), this protein is Acetyl-coenzyme A synthetase.